Here is a 206-residue protein sequence, read N- to C-terminus: Probable N-acetyltransferase 14 (206 aa).

The N-acetyltransferase domain occupies 6 to 206; it reads LSVREMREDE…MLVREFSKDL (201 aa). The chain crosses the membrane as a helical span at residues 57 to 77; sequence FILASFALALLLPVFLAVAAV.

It belongs to the camello family.

The protein resides in the membrane. Probable acetyltransferase that binds the 5'-GGACTACAG-3' sequence of coproporphyrinogen oxidase promoter. Able to activate transcription of a reporter construct in vitro. Its function is as follows. Probable acetyltransferase. In terms of biological role, may act as a transcription factor regulating the expression of coproporphyrinogen oxidase by binding to a promoter regulatory element. The polypeptide is Probable N-acetyltransferase 14 (Nat14) (Mus musculus (Mouse)).